Reading from the N-terminus, the 1225-residue chain is Structural maintenance of chromosomes protein 1 (1225 aa).

Position 33–40 (33–40) interacts with ATP; it reads GPNGSGKS. The stretch at 173–489 forms a coiled coil; the sequence is SGSIQYKKEY…SANNQEYDLN (317 aa). In terms of domain architecture, SMC hinge spans 527–641; that stretch reads PGVKGLVHDL…CNTLNIAKDL (115 aa). The stretch at 679 to 1063 forms a coiled coil; the sequence is KEEYQSLMSL…LKIKKKRKEL (385 aa). Residues 1057–1061 carry the Nuclear localization signal motif; the sequence is KKKRK.

The protein belongs to the SMC family. SMC1 subfamily. In terms of assembly, cohesin complexes are composed of the SMC1 and SMC3 heterodimer attached via their SMC hinge domain, MCD1/SCC1 which link them, and IRR1/SCC3, which interacts with MCD1. The cohesin complex also interacts with SCC2, which is required for its association with chromosomes.

It localises to the nucleus. The protein resides in the chromosome. Functionally, involved in chromosome cohesion during cell cycle and in DNA repair. Central component of cohesin complex. The cohesin complex is required for the cohesion of sister chromatids after DNA replication. The cohesin complex apparently forms a large proteinaceous ring within which sister chromatids can be trapped. At anaphase, the complex is cleaved and dissociates from chromatin, allowing sister chromatids to segregate. In Saccharomyces cerevisiae (strain ATCC 204508 / S288c) (Baker's yeast), this protein is Structural maintenance of chromosomes protein 1 (SMC1).